The sequence spans 259 residues: Imidazole glycerol phosphate synthase subunit HisF (259 aa).

Active-site residues include D11 and D130.

This sequence belongs to the HisA/HisF family. As to quaternary structure, heterodimer of HisH and HisF.

It is found in the cytoplasm. It catalyses the reaction 5-[(5-phospho-1-deoxy-D-ribulos-1-ylimino)methylamino]-1-(5-phospho-beta-D-ribosyl)imidazole-4-carboxamide + L-glutamine = D-erythro-1-(imidazol-4-yl)glycerol 3-phosphate + 5-amino-1-(5-phospho-beta-D-ribosyl)imidazole-4-carboxamide + L-glutamate + H(+). Its pathway is amino-acid biosynthesis; L-histidine biosynthesis; L-histidine from 5-phospho-alpha-D-ribose 1-diphosphate: step 5/9. In terms of biological role, IGPS catalyzes the conversion of PRFAR and glutamine to IGP, AICAR and glutamate. The HisF subunit catalyzes the cyclization activity that produces IGP and AICAR from PRFAR using the ammonia provided by the HisH subunit. This chain is Imidazole glycerol phosphate synthase subunit HisF, found in Lactococcus lactis subsp. cremoris (strain MG1363).